The sequence spans 493 residues: BICD family-like cargo adapter 2 (493 aa).

Coiled-coil stretches lie at residues 56–275 (ELGK…ELHM) and 365–431 (MQHV…LLST).

The protein belongs to the BICDR family.

In Xenopus laevis (African clawed frog), this protein is BICD family-like cargo adapter 2 (bicdl2).